The primary structure comprises 355 residues: Heat-inducible transcription repressor HrcA (355 aa).

The protein belongs to the HrcA family.

Functionally, negative regulator of class I heat shock genes (grpE-dnaK-dnaJ and groELS operons). Prevents heat-shock induction of these operons. This chain is Heat-inducible transcription repressor HrcA, found in Nitratidesulfovibrio vulgaris (strain DP4) (Desulfovibrio vulgaris).